Here is a 462-residue protein sequence, read N- to C-terminus: MDKKQLLRNLPKIDELLKEEIINRYLQENSRTLVVDSLRESIDHYRGEILKNNIDSFTKENVVNYFIDTLEENKSTKFKKVINATGVVIHTNLGRSLLAKEAIENVVKVSENYSNLEYDLKEGKRGSRYSHVEELIKKVTGAEAAMVVNNNAAAVMLALNTLCEEREAIVSRGQLVEIGGSFRVPDVMKFSRAHLVEVGTTNRTHLYDYENNINENTGVLLKVHTSNFKIMGFTEEVSSEEMVQLGEKYKLPVMEDIGSGTLVDFSKYGFTYEPTVQSSLEKGVDVVTFSGDKMLGGPQAGIIVGKKKYIDKMKKNQLTRALRIDKMTLAALEGTLKCYIDEKEAIENIPTLNMILSSKDIHKKRAQRLKRRLQNNVKDFNFKVSEDLSMVGGGSMPGERIPTYVVKVNSDKITAEKIEEKLRLSKNPIIVRVSKDEVILDVRTLFERDFNIIVEEFKKLLK.

An N6-(pyridoxal phosphate)lysine modification is found at K293.

Belongs to the SelA family. Pyridoxal 5'-phosphate is required as a cofactor.

It is found in the cytoplasm. The catalysed reaction is L-seryl-tRNA(Sec) + selenophosphate + H(+) = L-selenocysteinyl-tRNA(Sec) + phosphate. The protein operates within aminoacyl-tRNA biosynthesis; selenocysteinyl-tRNA(Sec) biosynthesis; selenocysteinyl-tRNA(Sec) from L-seryl-tRNA(Sec) (bacterial route): step 1/1. Converts seryl-tRNA(Sec) to selenocysteinyl-tRNA(Sec) required for selenoprotein biosynthesis. This is L-seryl-tRNA(Sec) selenium transferase from Clostridium botulinum (strain Loch Maree / Type A3).